We begin with the raw amino-acid sequence, 396 residues long: 2-methyl-aconitate isomerase (396 aa).

Substrate-binding positions include Ser-19 and 66–70 (SSTSK). The active-site Proton donor/acceptor is Cys-104. Residue Cys-104 is modified to Cysteine sulfinic acid (-SO2H). Residues Asn-106, Lys-278, Ser-309, and His-314 each coordinate substrate. Met-318 serves as the catalytic Proton donor/acceptor. Gly-319 contacts substrate.

The protein belongs to the PrpF family. As to quaternary structure, homodimer.

The catalysed reaction is 2-methyl-trans-aconitate = 2-methyl-cis-aconitate. The protein operates within organic acid metabolism; propanoate degradation. Its function is as follows. Catalyzes the isomerization of 2-methyl-trans-aconitate to yield 2-methyl-cis-aconitate through a base-catalyzed proton abstraction coupled with a rotation about C2-C3 bond of 2-methyl-aconitate. The polypeptide is 2-methyl-aconitate isomerase (Cupriavidus necator (Alcaligenes eutrophus)).